Consider the following 101-residue polypeptide: Small ribosomal subunit protein uS10 (101 aa).

Belongs to the universal ribosomal protein uS10 family. In terms of assembly, part of the 30S ribosomal subunit.

Functionally, involved in the binding of tRNA to the ribosomes. This chain is Small ribosomal subunit protein uS10, found in Christiangramia forsetii (strain DSM 17595 / CGMCC 1.15422 / KT0803) (Gramella forsetii).